The sequence spans 291 residues: Small ribosomal subunit biogenesis GTPase RsgA 1 (291 aa).

Positions 63–221 (ENALVRPPVA…VADTPGFSSI (159 aa)) constitute a CP-type G domain. GTP-binding positions include 112–115 (SKMD) and 164–172 (GQSGVGKST). C245, C250, H252, and C258 together coordinate Zn(2+).

It belongs to the TRAFAC class YlqF/YawG GTPase family. RsgA subfamily. In terms of assembly, monomer. Associates with 30S ribosomal subunit, binds 16S rRNA. Zn(2+) serves as cofactor.

It is found in the cytoplasm. In terms of biological role, one of several proteins that assist in the late maturation steps of the functional core of the 30S ribosomal subunit. Helps release RbfA from mature subunits. May play a role in the assembly of ribosomal proteins into the subunit. Circularly permuted GTPase that catalyzes slow GTP hydrolysis, GTPase activity is stimulated by the 30S ribosomal subunit. This is Small ribosomal subunit biogenesis GTPase RsgA 1 from Listeria monocytogenes serotype 4b (strain F2365).